Here is a 544-residue protein sequence, read N- to C-terminus: Chaperonin GroEL (544 aa).

ATP is bound by residues 30 to 33 (TLGP), lysine 51, 87 to 91 (DGTTT), glycine 415, and aspartate 495.

It belongs to the chaperonin (HSP60) family. In terms of assembly, forms a cylinder of 14 subunits composed of two heptameric rings stacked back-to-back. Interacts with the co-chaperonin GroES.

It is found in the cytoplasm. The catalysed reaction is ATP + H2O + a folded polypeptide = ADP + phosphate + an unfolded polypeptide.. Together with its co-chaperonin GroES, plays an essential role in assisting protein folding. The GroEL-GroES system forms a nano-cage that allows encapsulation of the non-native substrate proteins and provides a physical environment optimized to promote and accelerate protein folding. This Neisseria meningitidis serogroup C (strain 053442) protein is Chaperonin GroEL.